A 218-amino-acid chain; its full sequence is Small ribosomal subunit protein uS3c (218 aa).

The KH type-2 domain occupies 47 to 118; sequence VQKNIRISSG…KLNIAITRIS (72 aa).

Belongs to the universal ribosomal protein uS3 family. Part of the 30S ribosomal subunit.

The protein resides in the plastid. Its subcellular location is the chloroplast. The polypeptide is Small ribosomal subunit protein uS3c (rps3) (Nasturtium officinale (Watercress)).